Reading from the N-terminus, the 1768-residue chain is Maestro heat-like repeat-containing protein family member 1 homolog (1768 aa).

HEAT repeat units follow at residues 4 to 47 (TSQV…HQPN), 164 to 203 (VHNPFGLVPFLTDILSRTVPLLQHVKTDPLRCAWARAICS), 816 to 856 (QRLQ…AVHP), 1166 to 1204 (QSQMQIYLSAIFEMLTDRQSHVSSAAAQLLTYAVMARGA), 1483 to 1521 (EQLLVKCIRRLEDSLTDPSLRIRKLCVKGLGELSECSST), and 1731 to 1768 (TISRELVFTGLVALLKDSEDVNVRISATRAIANLHDFH).

The protein belongs to the MROH1 family. Homooligomer; homooligomerizes at lysosome scission sites.

It is found in the lysosome membrane. Functionally, lysosome fission factor. Recruited to lysosomes by rab-7 at scission sites and homooligomerizes to mediate the constriction and scission of lysosomal tubules. May sever membranes by inserting amphipathic helices into one bilayer leaflet. Lysosome fission is required to maintain their steady-state number, shape, size, composition and function, and to accomplish regeneration. This Caenorhabditis elegans protein is Maestro heat-like repeat-containing protein family member 1 homolog.